Consider the following 1058-residue polypeptide: Leucine--tRNA ligase, cytoplasmic (1058 aa).

Positions 48 to 58 match the 'HIGH' region motif; that stretch reads PYMNGRLHVGH. A 'KMSKS' region motif is present at residues 711–715; sequence KMSKS. Lysine 714 contacts ATP.

This sequence belongs to the class-I aminoacyl-tRNA synthetase family.

It localises to the cytoplasm. It catalyses the reaction tRNA(Leu) + L-leucine + ATP = L-leucyl-tRNA(Leu) + AMP + diphosphate. The protein is Leucine--tRNA ligase, cytoplasmic (leuS) of Dictyostelium discoideum (Social amoeba).